The primary structure comprises 151 residues: tRNA-specific adenosine deaminase (151 aa).

The region spanning Met-1 to Ser-111 is the CMP/dCMP-type deaminase domain. His-52 provides a ligand contact to Zn(2+). Residue Glu-54 is the Proton donor of the active site. Zn(2+)-binding residues include Cys-82 and Cys-85.

It belongs to the cytidine and deoxycytidylate deaminase family. As to quaternary structure, homodimer. The cofactor is Zn(2+).

The enzyme catalyses adenosine(34) in tRNA + H2O + H(+) = inosine(34) in tRNA + NH4(+). Its function is as follows. Catalyzes the deamination of adenosine to inosine at the wobble position 34 of tRNA(Arg2). The polypeptide is tRNA-specific adenosine deaminase (Aquifex aeolicus (strain VF5)).